The sequence spans 509 residues: Light-independent protochlorophyllide reductase subunit B (509 aa).

D36 is a [4Fe-4S] cluster binding site. The active-site Proton donor is the D298. Position 433–434 (433–434 (GM)) interacts with substrate.

Belongs to the ChlB/BchB/BchZ family. As to quaternary structure, protochlorophyllide reductase is composed of three subunits; ChlL, ChlN and ChlB. Forms a heterotetramer of two ChlB and two ChlN subunits. [4Fe-4S] cluster is required as a cofactor.

Its subcellular location is the plastid. It localises to the chloroplast. The catalysed reaction is chlorophyllide a + oxidized 2[4Fe-4S]-[ferredoxin] + 2 ADP + 2 phosphate = protochlorophyllide a + reduced 2[4Fe-4S]-[ferredoxin] + 2 ATP + 2 H2O. It participates in porphyrin-containing compound metabolism; chlorophyll biosynthesis (light-independent). Component of the dark-operative protochlorophyllide reductase (DPOR) that uses Mg-ATP and reduced ferredoxin to reduce ring D of protochlorophyllide (Pchlide) to form chlorophyllide a (Chlide). This reaction is light-independent. The NB-protein (ChlN-ChlB) is the catalytic component of the complex. This is Light-independent protochlorophyllide reductase subunit B from Ephedra altissima (High-climbing jointfir).